A 375-amino-acid polypeptide reads, in one-letter code: Alanine racemase (375 aa).

The active-site Proton acceptor; specific for D-alanine is Lys35. N6-(pyridoxal phosphate)lysine is present on Lys35. Arg133 is a binding site for substrate. The Proton acceptor; specific for L-alanine role is filled by Tyr261. Residue Met309 participates in substrate binding.

This sequence belongs to the alanine racemase family. It depends on pyridoxal 5'-phosphate as a cofactor.

It catalyses the reaction L-alanine = D-alanine. It participates in amino-acid biosynthesis; D-alanine biosynthesis; D-alanine from L-alanine: step 1/1. In terms of biological role, catalyzes the interconversion of L-alanine and D-alanine. May also act on other amino acids. The protein is Alanine racemase (alr) of Syntrophobacter fumaroxidans (strain DSM 10017 / MPOB).